A 254-amino-acid chain; its full sequence is MSRAGLDKKPDQVAAMFDQVARRYDVTNAVLSAGLDRTWRTATARALALAPGLRVLDVAAGTATSSRAFAAAGADVVACDFSLGMLAQARRRLADAAARAGAGAGTGGAGTGGGRVLLAAGDGLRLPFADGSFDRVTISFGLRNVAEGDVCLAELLRVTRPGGVLAVCEFSRPVWRPVRTAYMEYLMRALPAVARAVSSSPDSYVYLAESIRAWPGQAALAETIRAAGWTRVGWRNLSGGIVAVHRAVRPGGDD.

Residues threonine 62, aspartate 80, 122 to 123 (DG), and serine 139 each bind S-adenosyl-L-methionine.

The protein belongs to the class I-like SAM-binding methyltransferase superfamily. MenG/UbiE family.

The enzyme catalyses a 2-demethylmenaquinol + S-adenosyl-L-methionine = a menaquinol + S-adenosyl-L-homocysteine + H(+). The protein operates within quinol/quinone metabolism; menaquinone biosynthesis; menaquinol from 1,4-dihydroxy-2-naphthoate: step 2/2. Functionally, methyltransferase required for the conversion of demethylmenaquinol (DMKH2) to menaquinol (MKH2). The sequence is that of Demethylmenaquinone methyltransferase from Parafrankia sp. (strain EAN1pec).